A 197-amino-acid polypeptide reads, in one-letter code: Outer membrane protein 26 (197 aa).

The N-terminal stretch at 1 to 23 (MKNIAKVTALALGIALASGYASA) is a signal peptide.

This sequence belongs to the Skp family.

The protein localises to the cell outer membrane. This Haemophilus influenzae (strain ATCC 51907 / DSM 11121 / KW20 / Rd) protein is Outer membrane protein 26 (omp26).